We begin with the raw amino-acid sequence, 679 residues long: DNA ligase (679 aa).

NAD(+)-binding positions include 41–45, 90–91, and E120; these read DSVYD and SL. K122 (N6-AMP-lysine intermediate) is an active-site residue. Residues R143, E177, K293, and K317 each coordinate NAD(+). Zn(2+) contacts are provided by C411, C414, C429, and C434. The BRCT domain maps to 597–679; the sequence is DSNSWFAGKR…SETMREDAQA (83 aa).

It belongs to the NAD-dependent DNA ligase family. LigA subfamily. It depends on Mg(2+) as a cofactor. Mn(2+) is required as a cofactor.

The catalysed reaction is NAD(+) + (deoxyribonucleotide)n-3'-hydroxyl + 5'-phospho-(deoxyribonucleotide)m = (deoxyribonucleotide)n+m + AMP + beta-nicotinamide D-nucleotide.. Functionally, DNA ligase that catalyzes the formation of phosphodiester linkages between 5'-phosphoryl and 3'-hydroxyl groups in double-stranded DNA using NAD as a coenzyme and as the energy source for the reaction. It is essential for DNA replication and repair of damaged DNA. This is DNA ligase from Lactiplantibacillus plantarum (strain ATCC BAA-793 / NCIMB 8826 / WCFS1) (Lactobacillus plantarum).